Here is a 353-residue protein sequence, read N- to C-terminus: Paraneoplastic antigen Ma1 (353 aa).

Belongs to the PNMA family. Testis- and brain-specific. In some cancer patients, specifically expressed by paraneoplastic tumor cells.

The protein localises to the nucleus. Its subcellular location is the nucleolus. This chain is Paraneoplastic antigen Ma1 (PNMA1), found in Homo sapiens (Human).